We begin with the raw amino-acid sequence, 466 residues long: 3-isopropylmalate dehydratase large subunit (466 aa).

Positions 347, 407, and 410 each coordinate [4Fe-4S] cluster.

This sequence belongs to the aconitase/IPM isomerase family. LeuC type 1 subfamily. As to quaternary structure, heterodimer of LeuC and LeuD. The cofactor is [4Fe-4S] cluster.

The enzyme catalyses (2R,3S)-3-isopropylmalate = (2S)-2-isopropylmalate. It participates in amino-acid biosynthesis; L-leucine biosynthesis; L-leucine from 3-methyl-2-oxobutanoate: step 2/4. In terms of biological role, catalyzes the isomerization between 2-isopropylmalate and 3-isopropylmalate, via the formation of 2-isopropylmaleate. The protein is 3-isopropylmalate dehydratase large subunit of Buchnera aphidicola subsp. Thelaxes suberi.